A 285-amino-acid polypeptide reads, in one-letter code: Dihydropteroate synthase (285 aa).

The 259-residue stretch at 18-276 folds into the Pterin-binding domain; the sequence is PKIMGIVNLT…DVKATADALK (259 aa). Residue N25 participates in Mg(2+) binding. (7,8-dihydropterin-6-yl)methyl diphosphate is bound by residues T66, D99, N119, D190, K229, and 264–266; that span reads RVH.

It belongs to the DHPS family. As to quaternary structure, homodimer. Requires Mg(2+) as cofactor.

It carries out the reaction (7,8-dihydropterin-6-yl)methyl diphosphate + 4-aminobenzoate = 7,8-dihydropteroate + diphosphate. It participates in cofactor biosynthesis; tetrahydrofolate biosynthesis; 7,8-dihydrofolate from 2-amino-4-hydroxy-6-hydroxymethyl-7,8-dihydropteridine diphosphate and 4-aminobenzoate: step 1/2. Its function is as follows. Catalyzes the condensation of para-aminobenzoate (pABA) with 6-hydroxymethyl-7,8-dihydropterin diphosphate (DHPt-PP) to form 7,8-dihydropteroate (H2Pte), the immediate precursor of folate derivatives. This is Dihydropteroate synthase (folP) from Neisseria meningitidis serogroup B (strain ATCC BAA-335 / MC58).